The chain runs to 389 residues: D(-)-tartrate dehydratase (389 aa).

Substrate-binding positions include asparagine 21, asparagine 55, lysine 102, tyrosine 156, lysine 182, 182 to 184, 213 to 215, glutamate 239, glutamate 265, histidine 322, and 341 to 343; these read KMK, DAN, and ESY. Lysine 184 (acceptor) is an active-site residue. Mg(2+) contacts are provided by aspartate 213, glutamate 239, and glutamate 265. Histidine 322 functions as the Proton donor/acceptor in the catalytic mechanism.

It belongs to the mandelate racemase/muconate lactonizing enzyme family. Homooctamer; tetramer of dimers. Requires Mg(2+) as cofactor.

The enzyme catalyses (S,S)-tartrate = oxaloacetate + H2O. Functionally, catalyzes the dehydration of D-tartrate to oxaloacetate. The sequence is that of D(-)-tartrate dehydratase (tarD) from Bradyrhizobium diazoefficiens (strain JCM 10833 / BCRC 13528 / IAM 13628 / NBRC 14792 / USDA 110).